Reading from the N-terminus, the 385-residue chain is Cytochrome b (385 aa).

The next 4 membrane-spanning stretches (helical) occupy residues 34-54, 78-99, 114-134, and 179-199; these read FGSI…ILTM, WFIR…FIHI, WYSG…GYVL, and FLVL…THLL. 2 residues coordinate heme b: histidine 84 and histidine 98. Residues histidine 183 and histidine 197 each coordinate heme b. Position 202 (histidine 202) interacts with a ubiquinone. The next 4 membrane-spanning stretches (helical) occupy residues 227 to 247, 289 to 309, 321 to 341, and 348 to 368; these read FKDI…STLF, LMGV…PFLI, FMQF…WLGA, and YTIM…FLFP.

Belongs to the cytochrome b family. The cytochrome bc1 complex contains 3 respiratory subunits (MT-CYB, CYC1 and UQCRFS1), 2 core proteins (UQCRC1 and UQCRC2) and probably 6 low-molecular weight proteins. Heme b serves as cofactor.

The protein resides in the mitochondrion inner membrane. Component of the ubiquinol-cytochrome c reductase complex (complex III or cytochrome b-c1 complex) that is part of the mitochondrial respiratory chain. The b-c1 complex mediates electron transfer from ubiquinol to cytochrome c. Contributes to the generation of a proton gradient across the mitochondrial membrane that is then used for ATP synthesis. This is Cytochrome b (MT-CYB) from Myxine glutinosa (Atlantic hagfish).